The chain runs to 816 residues: Sucrose synthase 2 (816 aa).

S15 is modified (phosphoserine). Positions 280–757 (MVFNVVILSP…GLQRIEEKYT (478 aa)) are GT-B glycosyltransferase.

It belongs to the glycosyltransferase 1 family. Plant sucrose synthase subfamily.

The catalysed reaction is an NDP-alpha-D-glucose + D-fructose = a ribonucleoside 5'-diphosphate + sucrose + H(+). Its function is as follows. Sucrose-cleaving enzyme that provides UDP-glucose and fructose for various metabolic pathways. The protein is Sucrose synthase 2 (SUS1) of Zea mays (Maize).